Here is a 344-residue protein sequence, read N- to C-terminus: L-rhamnose-proton symporter (344 aa).

The next 10 helical transmembrane spans lie at 4-24 (AITM…CFYA), 38-58 (WSVG…ALLL), 68-88 (FSLS…IGNI), 101-121 (MGIG…TPII), 137-157 (TLLG…AGQL), 175-195 (LVLA…MNAA), 214-234 (LPSY…FCFI), 259-279 (VLLS…YAWG), 290-310 (ISWM…GLVL), and 323-343 (VLSL…IGMA).

It belongs to the L-rhamnose transporter (TC 2.A.7.6) family.

The protein resides in the cell inner membrane. It catalyses the reaction L-rhamnopyranose(in) + H(+)(in) = L-rhamnopyranose(out) + H(+)(out). Functionally, uptake of L-rhamnose across the cytoplasmic membrane with the concomitant transport of protons into the cell (symport system). This is L-rhamnose-proton symporter from Shigella boydii serotype 18 (strain CDC 3083-94 / BS512).